The chain runs to 607 residues: MVHPLVDRATSDMLIGPDWAMNLEICDMLNHEPGQTREVVSGIKKRLTSRTSKVQLLALTLLETIITNCGELIHMQVAEKDILHKMVKMAKRKPNIQVKEKILILIDTWQESFSGPQGRHPQYYAAYQELLRAGIVFPQRPQITPSSGQNGPSTRYPQNSRNARQEAIDTSTESEFPTLSLTEIQNARGIMDVLAEMMNAIDGNNKEGLKQEVVVDLVSQCRTYKQRVVHLVNSTSDESMLCQGLALNDDLQRLLAKHEAIASGNSMIKKEEKSKKEVPKDTTQIIDVGSSETKNGSVVAYTTNGPKIDLLSGDDFETPNADNSLALVPLGPPQPSSPVAKPDNSIVLIDMLSDNNCESSTPTSNPHANHQKVQQNYSNGFGPGHQEQSYYGQGSSAPVWNLQITQQPSSPAYGNQPFSPNFSPPASPHYGGQNNNVLALPPPPWEAQSPSSSPQYSPTHPMQVTQVVITTHTHQPLGYNPQGGSPHATNNNNNNMFGMFLPPMTGGHMPPPFGHNGHVTNNNYNPNMYGGYGGQAQPPQQYLVEQQMYGMSLQDNGNNNTNPYQVSSHQPPPMMKPMNKKPEDKLFGDLVELSKFKKPTSGRAGSM.

Residues 9 to 138 (ATSDMLIGPD…ELLRAGIVFP (130 aa)) enclose the VHS domain. The disordered stretch occupies residues 141–175 (PQITPSSGQNGPSTRYPQNSRNARQEAIDTSTESE). The GAT domain maps to 175–263 (EFPTLSLTEI…LLAKHEAIAS (89 aa)). Serine 297 is subject to Phosphoserine. Residues 355 to 379 (NNCESSTPTSNPHANHQKVQQNYSN) show a composition bias toward polar residues. Disordered stretches follow at residues 355-393 (NNCESSTPTSNPHANHQKVQQNYSNGFGPGHQEQSYYGQ), 407-460 (QPSS…SPTH), and 555-582 (DNGNNNTNPYQVSSHQPPPMMKPMNKKP). Phosphoserine is present on serine 410. Residues 448–460 (QSPSSSPQYSPTH) are compositionally biased toward low complexity. Polar residues predominate over residues 555 to 569 (DNGNNNTNPYQVSSH).

This sequence belongs to the TOM1 family. As to expression, specifically expressed in siliques and flowers.

Its subcellular location is the membrane. In terms of biological role, might contribute to the loading of the ESCRT machinery. This Arabidopsis thaliana (Mouse-ear cress) protein is TOM1-like protein 8.